A 699-amino-acid chain; its full sequence is Elongation factor G (699 aa).

The 276-residue stretch at 8-283 (EHIRNIGICA…AVVDFLPSPI (276 aa)) folds into the tr-type G domain. GTP contacts are provided by residues 17–24 (AHIDAGKT), 81–85 (DTPGH), and 135–138 (NKMD).

The protein belongs to the TRAFAC class translation factor GTPase superfamily. Classic translation factor GTPase family. EF-G/EF-2 subfamily.

The protein resides in the cytoplasm. In terms of biological role, catalyzes the GTP-dependent ribosomal translocation step during translation elongation. During this step, the ribosome changes from the pre-translocational (PRE) to the post-translocational (POST) state as the newly formed A-site-bound peptidyl-tRNA and P-site-bound deacylated tRNA move to the P and E sites, respectively. Catalyzes the coordinated movement of the two tRNA molecules, the mRNA and conformational changes in the ribosome. The protein is Elongation factor G of Rickettsia peacockii (strain Rustic).